A 707-amino-acid chain; its full sequence is DCC-interacting protein 13-alpha (707 aa).

Residues 1 to 428 (MPGIDKLPIE…PPTARTSSSG (428 aa)) are required for RAB5A binding. One can recognise a BAR domain in the interval 3-268 (GIDKLPIEET…DPLYLPDPDP (266 aa)). A coiled-coil region spans residues 234 to 257 (QNVRREMDGDVETMQQTIEDLEVA). The region spanning 277-375 (LTRKAGYLNA…WICTINNISK (99 aa)) is the PH domain. Disordered stretches follow at residues 397-433 (AVTPSPSFQQRHESLRPGGQSRPPTARTSSSGSLGSE), 466-490 (GQAKAFGQGGRRTNPFGESGGSTKS), and 636-707 (EKQK…ESEA). T399 carries the post-translational modification Phosphothreonine. S401 is subject to Phosphoserine. Residues 403 to 414 (SFQQRHESLRPG) carry the F&amp;H motif. Residue S410 is modified to Phosphoserine; by PKA. The 161-residue stretch at 495–655 (SILHQLFIVR…EKQQKELSKQ (161 aa)) folds into the PID domain. Positions 620–670 (LAKQIALHAELDRRASEKQKEIERVKEKQQKELSKQKQIEKDLEEQSRLIA) form a coiled coil. Over residues 636-666 (EKQKEIERVKEKQQKELSKQKQIEKDLEEQS) the composition is skewed to basic and acidic residues. Residues 679-691 (GSEGQLVLSSSQS) show a composition bias toward low complexity. 2 positions are modified to phosphoserine: S691 and S694. Positions 698 to 707 (EEGKKRESEA) are enriched in basic and acidic residues.

Homodimer. Binds RAB5A/Rab5 through an N-terminal domain. This interaction is essential for its recruitment to endosomal membranes as well as its role in cell proliferation. Binds DCC and the catalytic domain of the inactive form of AKT2 through its PID domain. Binds PIK3CA and subunits of the NuRD/MeCP1 complex. Interacts with OCRL and INPP5B. Interacts with NTRK2. Interacts with APPL2; interaction is independent of follicle stimulating hormone stimulation; interaction is decreased by adiponectin in a time-dependent manner. Forms a complex with APPL2 and RUVBL2. Forms a complex comprising APPL2, RUVBL2, CTNNB1, HDAC1 and HDAC2; interaction reduces interaction between CTNNB1, HDAC1, HDAC2 and RUVBL2 leading to the decrease of deacetylase activity of this complex; affects the recruitment of repressive complexes to the Wnt target genes. Interacts with ANXA2. Interacts with TGFBR1; interaction is TGF beta dependent; mediates trafficking of the TGFBR1 from the endosomes to the nucleus via microtubules in a TRAF6-dependent manner. Interacts with PRKCZ. Interacts with PIK3R1 and APPL2. Interacts with ADIPOR1; ADIPOQ enhances this interaction; inhibites adiponectin-stimulated binding of APPL2 to ADIPOR1. Phosphorylation at Ser-410 by PKA severely impairs binding to OCRL. In terms of tissue distribution, expressed in insulin-target tissues including skeletal muscle, liver, fat, and brain.

It localises to the early endosome membrane. Its subcellular location is the nucleus. The protein localises to the cytoplasm. It is found in the endosome. The protein resides in the cell projection. It localises to the ruffle. Its subcellular location is the cytoplasmic vesicle. The protein localises to the phagosome. Multifunctional adapter protein that binds to various membrane receptors, nuclear factors and signaling proteins to regulate many processes, such as cell proliferation, immune response, endosomal trafficking and cell metabolism. Regulates signaling pathway leading to cell proliferation through interaction with RAB5A and subunits of the NuRD/MeCP1 complex. Functions as a positive regulator of innate immune response via activation of AKT1 signaling pathway by forming a complex with APPL1 and PIK3R1. Inhibits Fc-gamma receptor-mediated phagocytosis through PI3K/Akt signaling in macrophages. Regulates TLR4 signaling in activated macrophages. Involved in trafficking of the TGFBR1 from the endosomes to the nucleus via microtubules in a TRAF6-dependent manner. Plays a role in cell metabolism by regulating adiponecting and insulin signaling pathways. Required for fibroblast migration through HGF cell signaling. Positive regulator of beta-catenin/TCF-dependent transcription through direct interaction with RUVBL2/reptin resulting in the relief of RUVBL2-mediated repression of beta-catenin/TCF target genes by modulating the interactions within the beta-catenin-reptin-HDAC complex. This chain is DCC-interacting protein 13-alpha, found in Mus musculus (Mouse).